A 638-amino-acid polypeptide reads, in one-letter code: ATP-dependent zinc metalloprotease FtsH (638 aa).

The Cytoplasmic portion of the chain corresponds to 1–7 (MRSTYKT). Residues 8-28 (IGLWVILIVLFVAFYNFFSQG) form a helical membrane-spanning segment. The Periplasmic segment spans residues 29–102 (NDQVQEPSFT…KYEREEQNSL (74 aa)). Residues 103 to 123 (WLTILGQWMPVVFLFLFFIFF) form a helical membrane-spanning segment. The Cytoplasmic portion of the chain corresponds to 124–638 (MRQLQGGSGK…GLPAMEPKKA (515 aa)). 195 to 202 (GSPGTGKT) lines the ATP pocket. Residue His417 coordinates Zn(2+). Glu418 is a catalytic residue. Positions 421 and 493 each coordinate Zn(2+). Positions 596–638 (GGQLTRERPPPRVNAPPKATEKKDKRKILDALEGLPAMEPKKA) are disordered. A compositionally biased stretch (basic and acidic residues) spans 614–625 (ATEKKDKRKILD).

It in the central section; belongs to the AAA ATPase family. In the C-terminal section; belongs to the peptidase M41 family. As to quaternary structure, homohexamer. Zn(2+) is required as a cofactor.

The protein localises to the cell inner membrane. Acts as a processive, ATP-dependent zinc metallopeptidase for both cytoplasmic and membrane proteins. Plays a role in the quality control of integral membrane proteins. This chain is ATP-dependent zinc metalloprotease FtsH, found in Myxococcus xanthus (strain DK1622).